A 344-amino-acid polypeptide reads, in one-letter code: MTAIIERRENSSLWARFCEWITSTENRLYIGWFGVLMVPTLLTATTVFIIGFIAAPPVDIDGIREPVSGSLLYGNNIISGAIVPTSNAIGLHFYPIWEAASVDEWLYNGGPYQMIVCHFFIGVCSYMGREWELSFRLGMRPWIAVAYSAPVAAATAVFIIYPIGQGSFSDGMPLGISGTFNFMIVFQAEHNILMHPFHMLGVAGVFGGSLFSAMHGSLVTSSLIRQTTENESTNNGYVFGQEEETYNIVAAHGYFGRLIFQYASFNNSRSLHFFLAAWPVIGIWFTAMGISTMAFNLNGFNFNQSIIDSQGRVINSWADIINRANLGMEVMHERNAHNFPLDLA.

Helical transmembrane passes span 29–46 (YIGWFGVLMVPTLLTATT), 118–133 (HFFIGVCSYMGREWEL), and 142–156 (WIAVAYSAPVAAATA). Position 118 (histidine 118) interacts with chlorophyll a. Residue tyrosine 126 coordinates pheophytin a. [CaMn4O5] cluster contacts are provided by aspartate 170 and glutamate 189. The helical transmembrane segment at 197–218 (FHMLGVAGVFGGSLFSAMHGSL) threads the bilayer. A chlorophyll a-binding site is contributed by histidine 198. A quinone contacts are provided by residues histidine 215 and 264–265 (SF). Histidine 215 is a binding site for Fe cation. Position 272 (histidine 272) interacts with Fe cation. Residues 274-288 (FLAAWPVIGIWFTAM) traverse the membrane as a helical segment. [CaMn4O5] cluster is bound by residues histidine 332, glutamate 333, aspartate 342, and alanine 344.

Belongs to the reaction center PufL/M/PsbA/D family. In terms of assembly, PSII is composed of 1 copy each of membrane proteins PsbA, PsbB, PsbC, PsbD, PsbE, PsbF, PsbH, PsbI, PsbJ, PsbK, PsbL, PsbM, PsbT, PsbY, PsbZ, Psb30/Ycf12, at least 3 peripheral proteins of the oxygen-evolving complex and a large number of cofactors. It forms dimeric complexes. It depends on The D1/D2 heterodimer binds P680, chlorophylls that are the primary electron donor of PSII, and subsequent electron acceptors. It shares a non-heme iron and each subunit binds pheophytin, quinone, additional chlorophylls, carotenoids and lipids. D1 provides most of the ligands for the Mn4-Ca-O5 cluster of the oxygen-evolving complex (OEC). There is also a Cl(-1) ion associated with D1 and D2, which is required for oxygen evolution. The PSII complex binds additional chlorophylls, carotenoids and specific lipids. as a cofactor. In terms of processing, tyr-161 forms a radical intermediate that is referred to as redox-active TyrZ, YZ or Y-Z.

Its subcellular location is the plastid. The protein localises to the chloroplast thylakoid membrane. The enzyme catalyses 2 a plastoquinone + 4 hnu + 2 H2O = 2 a plastoquinol + O2. Photosystem II (PSII) is a light-driven water:plastoquinone oxidoreductase that uses light energy to abstract electrons from H(2)O, generating O(2) and a proton gradient subsequently used for ATP formation. It consists of a core antenna complex that captures photons, and an electron transfer chain that converts photonic excitation into a charge separation. The D1/D2 (PsbA/PsbD) reaction center heterodimer binds P680, the primary electron donor of PSII as well as several subsequent electron acceptors. The polypeptide is Photosystem II protein D1 (Bigelowiella natans (Pedinomonas minutissima)).